Here is a 423-residue protein sequence, read N- to C-terminus: Histidine--tRNA ligase (423 aa).

This sequence belongs to the class-II aminoacyl-tRNA synthetase family. In terms of assembly, homodimer.

The protein resides in the cytoplasm. The catalysed reaction is tRNA(His) + L-histidine + ATP = L-histidyl-tRNA(His) + AMP + diphosphate + H(+). In Desulfosudis oleivorans (strain DSM 6200 / JCM 39069 / Hxd3) (Desulfococcus oleovorans), this protein is Histidine--tRNA ligase.